The sequence spans 167 residues: Lipoprotein signal peptidase (167 aa).

2 helical membrane-spanning segments follow: residues phenylalanine 56–phenylalanine 76 and threonine 84–aspartate 104. Catalysis depends on residues aspartate 113 and aspartate 139. Residues tryptophan 132–phenylalanine 152 form a helical membrane-spanning segment.

Belongs to the peptidase A8 family.

It is found in the cell inner membrane. It catalyses the reaction Release of signal peptides from bacterial membrane prolipoproteins. Hydrolyzes -Xaa-Yaa-Zaa-|-(S,diacylglyceryl)Cys-, in which Xaa is hydrophobic (preferably Leu), and Yaa (Ala or Ser) and Zaa (Gly or Ala) have small, neutral side chains.. It functions in the pathway protein modification; lipoprotein biosynthesis (signal peptide cleavage). This protein specifically catalyzes the removal of signal peptides from prolipoproteins. The sequence is that of Lipoprotein signal peptidase from Chlorobium luteolum (strain DSM 273 / BCRC 81028 / 2530) (Pelodictyon luteolum).